The chain runs to 306 residues: Non-homologous end joining protein Ku 2 (306 aa).

Positions 21–206 (ISFGLVNIGV…EVSKQEIDMA (186 aa)) constitute a Ku domain. Residues 233–306 (LIDAKTKGTK…GSRDKTRKRA (74 aa)) are disordered. Residues 274–290 (RTSRRKTTASASRRRSS) are compositionally biased toward basic residues. The span at 291-300 (SNREKTGSRD) shows a compositional bias: basic and acidic residues.

The protein belongs to the prokaryotic Ku family. In terms of assembly, homodimer. Interacts with LigD.

With LigD forms a non-homologous end joining (NHEJ) DNA repair enzyme, which repairs dsDNA breaks with reduced fidelity. Binds linear dsDNA with 5'- and 3'- overhangs but not closed circular dsDNA nor ssDNA. Recruits and stimulates the ligase activity of LigD. This Saccharopolyspora erythraea (strain ATCC 11635 / DSM 40517 / JCM 4748 / NBRC 13426 / NCIMB 8594 / NRRL 2338) protein is Non-homologous end joining protein Ku 2.